A 194-amino-acid polypeptide reads, in one-letter code: Endo-1,4-beta-xylanase (194 aa).

G1 carries the post-translational modification N-acetylglycine. The region spanning 1 to 191 is the GH11 domain; it reads GTTPNSEGWH…SSGYARITVA (191 aa). E86 functions as the Nucleophile in the catalytic mechanism. A disulfide bridge connects residues C110 and C154. The active-site Proton donor is the E178.

The protein belongs to the glycosyl hydrolase 11 (cellulase G) family.

The catalysed reaction is Endohydrolysis of (1-&gt;4)-beta-D-xylosidic linkages in xylans.. The protein operates within glycan degradation; xylan degradation. The chain is Endo-1,4-beta-xylanase from Byssochlamys spectabilis (Paecilomyces variotii).